A 170-amino-acid chain; its full sequence is Neurotensin/neuromedin N (170 aa).

The N-terminal stretch at 1–23 is a signal peptide; sequence MMAGMKIQLVCMILLAFSSWSLC.

The protein belongs to the neurotensin family. Interacts with NTSR1. Interacts with SORT1. Interacts with SORL1. Post-translationally, neurotensin is cleaved and degraded by Angiotensin-converting enzyme (ACE) and neprilysin (MME). As to expression, brain and gut.

It is found in the secreted. The protein localises to the cytoplasmic vesicle. The protein resides in the secretory vesicle. Functionally, neurotensin may play an endocrine or paracrine role in the regulation of fat metabolism. It causes contraction of smooth muscle. The sequence is that of Neurotensin/neuromedin N (NTS) from Bos taurus (Bovine).